The primary structure comprises 67 residues: Phycobilisome 7.8 kDa linker polypeptide, allophycocyanin-associated, core (67 aa).

Residues 1–56 (MRVFKVTACVPSQTRIRTQRELQNTYFTKLVPYDNWFREQQRIMKMGGKIVKVELA) enclose the CpcD-like domain.

This sequence belongs to the phycobilisome linker protein family.

Its subcellular location is the cellular thylakoid membrane. In terms of biological role, rod linker protein, associated with allophycocyanin. Linker polypeptides determine the state of aggregation and the location of the disk-shaped phycobiliprotein units within the phycobilisome and modulate their spectroscopic properties in order to mediate a directed and optimal energy transfer. In Arthrospira platensis (Spirulina platensis), this protein is Phycobilisome 7.8 kDa linker polypeptide, allophycocyanin-associated, core (apcC).